The following is a 484-amino-acid chain: Zinc metalloproteinase-disintegrin BlatH1 (484 aa).

Residues 1 to 20 (MIQVLLVTICLAALPYQGSS) form the signal peptide. The propeptide occupies 21-190 (IILESGNVND…KKASQSNLTP (170 aa)). Residue Glu191 is modified to Pyrrolidone carboxylic acid (Glu). A Peptidase M12B domain is found at 199–395 (KYVELVIVAD…QNSQCILNEP (197 aa)). Glu202 is a binding site for Ca(2+). Residue Asn259 is glycosylated (N-linked (GlcNAc...) asparagine). Position 286 (Asp286) interacts with Ca(2+). The N-linked (GlcNAc...) asparagine glycan is linked to Asn297. Disulfide bonds link Cys310-Cys390, Cys350-Cys374, and Cys352-Cys357. His335 lines the Zn(2+) pocket. The active site involves Glu336. Residues His339 and His345 each contribute to the Zn(2+) site. Asn373 is a glycosylation site (N-linked (GlcNAc...) asparagine). Ca(2+)-binding residues include Cys390, Asn393, Val405, Asn408, Glu412, Glu415, and Asp418. The Disintegrin domain maps to 403 to 484 (PPVCGNEILE…GQSADCPSNG (82 aa)). Disulfide bonds link Cys406–Cys425, Cys417–Cys435, Cys419–Cys430, Cys429–Cys452, Cys443–Cys449, Cys448–Cys473, and Cys461–Cys480. The short motif at 465-467 (TDN) is the TDN-tripeptide element.

The protein belongs to the venom metalloproteinase (M12B) family. P-II subfamily. P-IIc sub-subfamily. In terms of assembly, homodimer. Zn(2+) serves as cofactor. The N-terminus is blocked. As to expression, expressed by the venom gland.

The protein resides in the secreted. Platelet aggregation in inhibited by the metalloproteinase inhibitors EDTA and Batimastat. The hemorrhagic activity is not inhibited by the plasma proteinase inhibitor alpha2-macroglobulin, although the SVMP is able to cleave this plasma inhibitor, generating a 90 kDa product. Its function is as follows. Snake venom zinc metalloprotease-disintegrin that hydrolyzes azocasein, gelatin and fibrinogen (Aalpha and Bbeta chains and partially gamma-chain), and exerts a potent local and systemic hemorrhagic activity in mice. It inhibits ADP- and collagen-induced human platelet aggregation (IC(50) = 0.3 uM and 0.7 uM for ADP and collagen, respectively). This inhibition is dependent of protease activity, and probably occurs through the degradation of an unknown platelet receptor. This is Zinc metalloproteinase-disintegrin BlatH1 from Bothriechis lateralis (Side-striped palm pitviper).